A 416-amino-acid polypeptide reads, in one-letter code: Chorismate synthase (416 aa).

NADP(+) is bound by residues Arg-40 and Arg-46. FMN is bound by residues 135-137, 256-257, Gly-300, 315-319, and Arg-341; these read RAS, QA, and KPIAT.

Belongs to the chorismate synthase family. In terms of assembly, homotetramer. The cofactor is FMNH2.

It catalyses the reaction 5-O-(1-carboxyvinyl)-3-phosphoshikimate = chorismate + phosphate. It participates in metabolic intermediate biosynthesis; chorismate biosynthesis; chorismate from D-erythrose 4-phosphate and phosphoenolpyruvate: step 7/7. Catalyzes the anti-1,4-elimination of the C-3 phosphate and the C-6 proR hydrogen from 5-enolpyruvylshikimate-3-phosphate (EPSP) to yield chorismate, which is the branch point compound that serves as the starting substrate for the three terminal pathways of aromatic amino acid biosynthesis. This reaction introduces a second double bond into the aromatic ring system. The protein is Chorismate synthase of Kocuria rhizophila (strain ATCC 9341 / DSM 348 / NBRC 103217 / DC2201).